The primary structure comprises 317 residues: Ribosomal RNA small subunit methyltransferase H (317 aa).

S-adenosyl-L-methionine is bound by residues Gly-39 to His-41, Asp-59, Phe-83, Asp-104, and Gln-111.

The protein belongs to the methyltransferase superfamily. RsmH family.

The protein resides in the cytoplasm. The enzyme catalyses cytidine(1402) in 16S rRNA + S-adenosyl-L-methionine = N(4)-methylcytidine(1402) in 16S rRNA + S-adenosyl-L-homocysteine + H(+). Its function is as follows. Specifically methylates the N4 position of cytidine in position 1402 (C1402) of 16S rRNA. The chain is Ribosomal RNA small subunit methyltransferase H from Paraburkholderia xenovorans (strain LB400).